Here is a 188-residue protein sequence, read N- to C-terminus: Pyridoxal 5'-phosphate synthase subunit PdxT (188 aa).

L-glutamine is bound at residue Gly-46–Ser-48. Residue Cys-78 is the Nucleophile of the active site. Residues Arg-105 and Ile-134–Arg-135 each bind L-glutamine. Residues His-170 and Glu-172 each act as charge relay system in the active site.

The protein belongs to the glutaminase PdxT/SNO family. In terms of assembly, in the presence of PdxS, forms a dodecamer of heterodimers. Only shows activity in the heterodimer.

The enzyme catalyses aldehydo-D-ribose 5-phosphate + D-glyceraldehyde 3-phosphate + L-glutamine = pyridoxal 5'-phosphate + L-glutamate + phosphate + 3 H2O + H(+). The catalysed reaction is L-glutamine + H2O = L-glutamate + NH4(+). It participates in cofactor biosynthesis; pyridoxal 5'-phosphate biosynthesis. In terms of biological role, catalyzes the hydrolysis of glutamine to glutamate and ammonia as part of the biosynthesis of pyridoxal 5'-phosphate. The resulting ammonia molecule is channeled to the active site of PdxS. This chain is Pyridoxal 5'-phosphate synthase subunit PdxT, found in Moorella thermoacetica (strain ATCC 39073 / JCM 9320).